A 469-amino-acid chain; its full sequence is Glutamate--tRNA ligase (469 aa).

Positions 11-21 (PSPTGFIHLGN) match the 'HIGH' region motif. The 'KMSKS' region signature appears at 243-247 (KMSKR). K246 contributes to the ATP binding site.

The protein belongs to the class-I aminoacyl-tRNA synthetase family. Glutamate--tRNA ligase type 1 subfamily. Monomer.

The protein resides in the cytoplasm. The enzyme catalyses tRNA(Glu) + L-glutamate + ATP = L-glutamyl-tRNA(Glu) + AMP + diphosphate. Catalyzes the attachment of glutamate to tRNA(Glu) in a two-step reaction: glutamate is first activated by ATP to form Glu-AMP and then transferred to the acceptor end of tRNA(Glu). The sequence is that of Glutamate--tRNA ligase from Burkholderia orbicola (strain AU 1054).